A 118-amino-acid chain; its full sequence is Large ribosomal subunit protein bL19 (118 aa).

It belongs to the bacterial ribosomal protein bL19 family.

In terms of biological role, this protein is located at the 30S-50S ribosomal subunit interface and may play a role in the structure and function of the aminoacyl-tRNA binding site. This Wolinella succinogenes (strain ATCC 29543 / DSM 1740 / CCUG 13145 / JCM 31913 / LMG 7466 / NCTC 11488 / FDC 602W) (Vibrio succinogenes) protein is Large ribosomal subunit protein bL19.